The primary structure comprises 473 residues: H(+)/Cl(-) exchange transporter ClcA (473 aa).

The Cytoplasmic portion of the chain corresponds to 1–32 (MKTDTPSLETPQAARLRRRQLIRQLLERDKTP). Residues 33-69 (LAILFMAAVVGTLVGLAAVAFDKGVAWLQNQRMEALV) traverse the membrane as a helical segment. Over 70-76 (HTADNYP) the chain is Periplasmic. The helical transmembrane segment at 77-100 (LLLTVAFLCSAVLAMFGYFLVRKY) threads the bilayer. The Selectivity filter part_1 motif lies at 106-110 (GSGIP). Serine 107 lines the chloride pocket. The helical intramembrane region spans 109 to 116 (IPEIEGAL). Over 117 to 123 (EDQRPVR) the chain is Cytoplasmic. A run of 2 helical transmembrane segments spans residues 124–141 (WWRV…TLGG) and 148–166 (EGPT…LDIF). The Selectivity filter part_2 motif lies at 146 to 150 (GREGP). At 167–176 (RLKGDEARHT) the chain is on the cytoplasmic side. Intramembrane regions (helical) lie at residues 177–189 (LLAT…LAAA) and 193–201 (PLAGILFII). Topologically, residues 202–214 (EEMRPQFRYTLIS) are cytoplasmic. Residues 215–232 (IKAVFIGVIMSTIMYRIF) form a helical membrane-spanning segment. Topologically, residues 233–252 (NHEVALIDVGKLSDAPLNTL) are periplasmic. Residues 253-281 (WLYLILGIIFGIFGPIFNKWVLGMQDLLH) traverse the membrane as a helical segment. Topologically, residues 282–287 (RVHGGN) are cytoplasmic. A helical membrane pass occupies residues 288-309 (ITKWVLMGGAIGGLCGLLGFVA). Topologically, residues 310–329 (PATSGGGFNLIPIATAGNFS) are periplasmic. Helical transmembrane passes span 330-349 (MGML…LCFS) and 355-376 (GIFA…MVVV). Positions 355-359 (GIFAP) match the Selectivity filter part_3 motif. Residues isoleucine 356 and phenylalanine 357 each coordinate chloride. Topologically, residues 377 to 386 (ELFPQYHLEA) are periplasmic. Residues 387-401 (GTFAIAGMGALLAAS) constitute an intramembrane region (helical). The segment at residues 402–404 (IRA) is an intramembrane region (note=Loop between two helices). Positions 405-416 (PLTGIILVLEMT) form an intramembrane region, helical. The segment at residues 417–421 (DNYQL) is an intramembrane region (note=Loop between two helices). The chain crosses the membrane as a helical span at residues 422 to 438 (ILPMIITGLGATLLAQF). The Cytoplasmic portion of the chain corresponds to 439 to 473 (TGGKPLYSEILARTLAKQEAEQLARSKAASASENT). Tyrosine 445 provides a ligand contact to chloride.

It belongs to the chloride channel (TC 2.A.49) family. ClcA subfamily. Homodimer.

Its subcellular location is the cell inner membrane. It catalyses the reaction 2 chloride(in) + H(+)(out) = 2 chloride(out) + H(+)(in). Functionally, proton-coupled chloride transporter. Functions as antiport system and exchanges two chloride ions for 1 proton. Probably acts as an electrical shunt for an outwardly-directed proton pump that is linked to amino acid decarboxylation, as part of the extreme acid resistance (XAR) response. This chain is H(+)/Cl(-) exchange transporter ClcA, found in Shigella boydii serotype 4 (strain Sb227).